A 283-amino-acid polypeptide reads, in one-letter code: ATP phosphoribosyltransferase (283 aa).

The protein belongs to the ATP phosphoribosyltransferase family. Long subfamily. Mg(2+) is required as a cofactor.

Its subcellular location is the cytoplasm. The enzyme catalyses 1-(5-phospho-beta-D-ribosyl)-ATP + diphosphate = 5-phospho-alpha-D-ribose 1-diphosphate + ATP. It functions in the pathway amino-acid biosynthesis; L-histidine biosynthesis; L-histidine from 5-phospho-alpha-D-ribose 1-diphosphate: step 1/9. With respect to regulation, feedback inhibited by histidine. Its function is as follows. Catalyzes the condensation of ATP and 5-phosphoribose 1-diphosphate to form N'-(5'-phosphoribosyl)-ATP (PR-ATP). Has a crucial role in the pathway because the rate of histidine biosynthesis seems to be controlled primarily by regulation of HisG enzymatic activity. In Bifidobacterium longum (strain DJO10A), this protein is ATP phosphoribosyltransferase.